Consider the following 529-residue polypeptide: Fibroblast growth factor receptor-like 1 (529 aa).

Residues 1–20 form the signal peptide; it reads MTRSPALLLLLLGALPSAEA. Residues 21–374 lie on the Extracellular side of the membrane; that stretch reads ARGPPRMADK…SSSSTSLPWP (354 aa). Ig-like C2-type domains lie at 25–111, 143–233, and 242–350; these read PRMA…YTLI, PRFT…YKVD, and PVLT…AFLT. C47 and C95 are oxidised to a cystine. N-linked (GlcNAc...) asparagine glycosylation is present at N107. Positions 116–151 are disordered; that stretch reads ISPGKESPGPGGSSGGQEDPASQQWARPRFTQPSKM. A disulfide bridge links C168 with C217. Residues N227, N251, and N289 are each glycosylated (N-linked (GlcNAc...) asparagine). Cysteines 264 and 334 form a disulfide. A helical transmembrane segment spans residues 375–395; the sequence is VVIGIPAGAVFILGTVLLWLC. The Cytoplasmic portion of the chain corresponds to 396–529; the sequence is QTKKKPCAPA…RIENNGGRVS (134 aa). The tract at residues 405 to 427 is disordered; that stretch reads ASTLPVPGHRPPGTSRERSGDKD.

As to quaternary structure, interacts with FGF2 with a low affinity. In terms of tissue distribution, highly expressed in the kidney, brain and lung. Weakly expressed in the muscle, thymus, lymph node, stomach, intestine, colon and liver. Expressed in fetal cartilaginous structures like the nasal cartilage, the ribs and the sternum as well as in the cartilaginous rudiments of developing bones such as the vertebrae and the pelvic bone. High expression is found in the muscles of the tongue and the diaphragm.

It localises to the cell membrane. Functionally, has a negative effect on cell proliferation. The chain is Fibroblast growth factor receptor-like 1 (Fgfrl1) from Mus musculus (Mouse).